Reading from the N-terminus, the 243-residue chain is 1-(5-phosphoribosyl)-5-[(5-phosphoribosylamino)methylideneamino] imidazole-4-carboxamide isomerase (243 aa).

D8 acts as the Proton acceptor in catalysis. The Proton donor role is filled by D129.

Belongs to the HisA/HisF family.

It localises to the cytoplasm. It carries out the reaction 1-(5-phospho-beta-D-ribosyl)-5-[(5-phospho-beta-D-ribosylamino)methylideneamino]imidazole-4-carboxamide = 5-[(5-phospho-1-deoxy-D-ribulos-1-ylimino)methylamino]-1-(5-phospho-beta-D-ribosyl)imidazole-4-carboxamide. Its pathway is amino-acid biosynthesis; L-histidine biosynthesis; L-histidine from 5-phospho-alpha-D-ribose 1-diphosphate: step 4/9. This chain is 1-(5-phosphoribosyl)-5-[(5-phosphoribosylamino)methylideneamino] imidazole-4-carboxamide isomerase, found in Geobacter sp. (strain M21).